The following is a 289-amino-acid chain: 4-hydroxybenzoate octaprenyltransferase (289 aa).

Transmembrane regions (helical) follow at residues 22–42 (AGWL…SHGF), 45–65 (WHLV…GCCI), 96–116 (LGLG…TNAV), 118–138 (IAWS…KRYV), 140–160 (MPQA…FAAV), 164–184 (VPPL…AYDT), 211–231 (VAGV…ALIQ), 236–256 (AIFM…GWLI), and 267–287 (AFRL…LSYW).

This sequence belongs to the UbiA prenyltransferase family. Requires Mg(2+) as cofactor.

It localises to the cell inner membrane. The enzyme catalyses all-trans-octaprenyl diphosphate + 4-hydroxybenzoate = 4-hydroxy-3-(all-trans-octaprenyl)benzoate + diphosphate. It participates in cofactor biosynthesis; ubiquinone biosynthesis. Functionally, catalyzes the prenylation of para-hydroxybenzoate (PHB) with an all-trans polyprenyl group. Mediates the second step in the final reaction sequence of ubiquinone-8 (UQ-8) biosynthesis, which is the condensation of the polyisoprenoid side chain with PHB, generating the first membrane-bound Q intermediate 3-octaprenyl-4-hydroxybenzoate. In Polaromonas naphthalenivorans (strain CJ2), this protein is 4-hydroxybenzoate octaprenyltransferase.